A 286-amino-acid polypeptide reads, in one-letter code: 4-hydroxybenzoate octaprenyltransferase (286 aa).

7 consecutive transmembrane segments (helical) span residues 22-42 (IGTL…EKAM), 45-65 (LSVL…GCVI), 98-118 (LFIV…LYTI), 143-163 (FFLG…TIEA), 213-233 (IIAL…YLSQ), 238-255 (YFIV…QCRL), and 266-286 (NAFL…LFGI).

This sequence belongs to the UbiA prenyltransferase family. Requires Mg(2+) as cofactor.

Its subcellular location is the cell inner membrane. The enzyme catalyses all-trans-octaprenyl diphosphate + 4-hydroxybenzoate = 4-hydroxy-3-(all-trans-octaprenyl)benzoate + diphosphate. It functions in the pathway cofactor biosynthesis; ubiquinone biosynthesis. Functionally, catalyzes the prenylation of para-hydroxybenzoate (PHB) with an all-trans polyprenyl group. Mediates the second step in the final reaction sequence of ubiquinone-8 (UQ-8) biosynthesis, which is the condensation of the polyisoprenoid side chain with PHB, generating the first membrane-bound Q intermediate 3-octaprenyl-4-hydroxybenzoate. The chain is 4-hydroxybenzoate octaprenyltransferase from Histophilus somni (strain 2336) (Haemophilus somnus).